Reading from the N-terminus, the 277-residue chain is Large ribosomal subunit protein uL2 (277 aa).

Residues 218–277 (PTVRGSVMNPNDHPHGGGEGKAPVGRKAPSTPWGKPALGLKTRNKKAKSDKLIVRRRNEK) form a disordered region. Over residues 264 to 277 (AKSDKLIVRRRNEK) the composition is skewed to basic and acidic residues.

Belongs to the universal ribosomal protein uL2 family. Part of the 50S ribosomal subunit. Forms a bridge to the 30S subunit in the 70S ribosome.

In terms of biological role, one of the primary rRNA binding proteins. Required for association of the 30S and 50S subunits to form the 70S ribosome, for tRNA binding and peptide bond formation. It has been suggested to have peptidyltransferase activity; this is somewhat controversial. Makes several contacts with the 16S rRNA in the 70S ribosome. This chain is Large ribosomal subunit protein uL2, found in Streptococcus pyogenes serotype M4 (strain MGAS10750).